We begin with the raw amino-acid sequence, 158 residues long: NADH-quinone oxidoreductase subunit B (158 aa).

[4Fe-4S] cluster is bound by residues C37, C38, C102, and C132.

Belongs to the complex I 20 kDa subunit family. In terms of assembly, NDH-1 is composed of 14 different subunits. Subunits NuoB, C, D, E, F, and G constitute the peripheral sector of the complex. Requires [4Fe-4S] cluster as cofactor.

It localises to the cell inner membrane. It catalyses the reaction a quinone + NADH + 5 H(+)(in) = a quinol + NAD(+) + 4 H(+)(out). In terms of biological role, NDH-1 shuttles electrons from NADH, via FMN and iron-sulfur (Fe-S) centers, to quinones in the respiratory chain. Couples the redox reaction to proton translocation (for every two electrons transferred, four hydrogen ions are translocated across the cytoplasmic membrane), and thus conserves the redox energy in a proton gradient. In Methylobacillus flagellatus (strain ATCC 51484 / DSM 6875 / VKM B-1610 / KT), this protein is NADH-quinone oxidoreductase subunit B.